Consider the following 265-residue polypeptide: Protein synthesis inhibitor PD-S2 (265 aa).

Disulfide bonds link Cys34-Cys262 and Cys88-Cys110. Asn120 carries N-linked (GlcNAc...) asparagine glycosylation.

Belongs to the ribosome-inactivating protein family. Type 1 RIP subfamily. Post-translationally, glycosylated. Seeds.

It catalyses the reaction Endohydrolysis of the N-glycosidic bond at one specific adenosine on the 28S rRNA.. Inhibits protein synthesis in animal cells. Useful as immunotoxin for pharmacological applications. The protein is Protein synthesis inhibitor PD-S2 of Phytolacca dioica (Bella sombra tree).